The chain runs to 240 residues: Myomodulin neuropeptides 2 (240 aa).

An N-terminal signal peptide occupies residues 1-23 (MWKILETCSCFLVVAVLSGLGKA). The interval 23–44 (AQPESFSGSAVTDDSTSGANKR) is disordered. A propeptide spanning residues 24 to 44 (QPESFSGSAVTDDSTSGANKR) is cleaved from the precursor. A compositionally biased stretch (polar residues) spans 26–41 (ESFSGSAVTDDSTSGA). Leucine amide is present on residues L51 and L60. 2 propeptides (connecting peptide) span residues 72-81 (SGHQVPMLRA) and 84-112 (GSPD…RDQS). A81 carries the alanine amide modification. Q115 is subject to Pyrrolidone carboxylic acid. At Y121 the chain carries Tyrosine amide. Propeptides (connecting peptide) lie at residues 124–147 (DNNG…SNFD), 124–148 (DNNG…NFDL), 124–149 (DNNG…FDLL), 124–168 (DNNG…GGRY), 131–168 (DLLD…GGRY), 149–168 (LSSL…GGRY), 150–168 (SSLN…GGRY), 151–168 (SLNN…GGRY), 171–190 (SLPD…LVQS), and 171–199 (SLPD…PYSS). Isoleucine amide is present on I207. The propeptide occupies 210-219 (FSGSPRLQAK). The tract at residues 212–240 (GSPRLQAKAVPRPRIGRQESQMREAKSAE) is disordered. The residue at position 226 (I226) is an Isoleucine amide. The propeptide occupies 227–240 (GRQESQMREAKSAE). Residues 227–240 (GRQESQMREAKSAE) are compositionally biased toward basic and acidic residues.

In terms of tissue distribution, expressed in the pedal-buccal projection neurons in the pedal ganglion.

It is found in the secreted. MMG2-DPs (Myomodulin gene 2-derived peptides) bias egestive feeding programs toward ingestive ones, and modulate accessory radula closer (ARC) muscle contractions. This Aplysia californica (California sea hare) protein is Myomodulin neuropeptides 2 (MMG2).